We begin with the raw amino-acid sequence, 704 residues long: Non-sulfated chondroitin lyase E66 (704 aa).

Residues 1–23 form the signal peptide; the sequence is MSIVLIIVIVVIFLICFLYLSNS. Residues asparagine 236 and histidine 291 each act as proton acceptor in the active site. Catalysis depends on tyrosine 299, which acts as the Proton donor.

The protein belongs to the baculoviridae E66 family.

It localises to the virion membrane. Its subcellular location is the host nucleus. It is found in the host cytoplasm. In terms of biological role, component of the polyhedra envelope. Plays an essential role in oral infectivity. May digest, with its chondroitin lyase activity, the chondroitin sulfate barrier of the peritrophic matrix of the host midgut to facilitate viral infection in the epithelial cells. This Lepidoptera (butterflies and moths) protein is Non-sulfated chondroitin lyase E66 (P79).